Reading from the N-terminus, the 144-residue chain is MAKKIVGYVKLQIPAGKANPSPPVGPALGQRGLNIMQFCKEFNAATQAMEPGMPVPVVITAYADRTFSFITKTPPNTYFLLKAAKVQKGSPTVGKSAAVGRVTMSQLREIAETKFQDMNANDIDGAVRMLAGSAKSMGLTVVEG.

Belongs to the universal ribosomal protein uL11 family. In terms of assembly, part of the ribosomal stalk of the 50S ribosomal subunit. Interacts with L10 and the large rRNA to form the base of the stalk. L10 forms an elongated spine to which L12 dimers bind in a sequential fashion forming a multimeric L10(L12)X complex. Post-translationally, one or more lysine residues are methylated.

In terms of biological role, forms part of the ribosomal stalk which helps the ribosome interact with GTP-bound translation factors. The polypeptide is Large ribosomal subunit protein uL11 (Granulibacter bethesdensis (strain ATCC BAA-1260 / CGDNIH1)).